The chain runs to 83 residues: Spanin, outer lipoprotein subunit (83 aa).

A signal peptide spans 1–50 (MSTLRELRLRRALKEQSMRYLLSIKKTLPRWKGALIGLFLICVATISGCA).

Belongs to the T7likevirus o-spanin family. As to quaternary structure, homodimer. Interacts (via C-terminus) with the spanin inner membrane subunit (via C-terminus). Part of the spanin complex which spans the entire periplasmic space. The spanin complex is composed of spanin inner membrane subunit and spanin outer membrane subunit.

It is found in the host cell outer membrane. Component of the spanin complex that disrupts the host outer membrane and participates in cell lysis during virus exit. The spanin complex conducts the final step in host lysis by disrupting the outer membrane after holin and endolysin action have permeabilized the inner membrane and degraded the host peptidoglycans. Host outer membrane disruption is possibly due to local fusion between the inner and outer membrane performed by the spanin complex. This chain is Spanin, outer lipoprotein subunit, found in Escherichia phage T7 (Bacteriophage T7).